The following is a 258-amino-acid chain: NH(3)-dependent NAD(+) synthetase (258 aa).

34–41 (GLSGGIDS) contributes to the ATP binding site. Aspartate 40 is a binding site for Mg(2+). Position 116 (arginine 116) interacts with deamido-NAD(+). Threonine 136 is an ATP binding site. Mg(2+) is bound at residue glutamate 141. Residues lysine 165 and serine 187 each contribute to the ATP site.

It belongs to the NAD synthetase family. As to quaternary structure, homodimer.

It catalyses the reaction deamido-NAD(+) + NH4(+) + ATP = AMP + diphosphate + NAD(+) + H(+). The protein operates within cofactor biosynthesis; NAD(+) biosynthesis; NAD(+) from deamido-NAD(+) (ammonia route): step 1/1. Its function is as follows. Catalyzes the ATP-dependent amidation of deamido-NAD to form NAD. Uses ammonia as a nitrogen source. The polypeptide is NH(3)-dependent NAD(+) synthetase (Fusobacterium nucleatum subsp. nucleatum (strain ATCC 25586 / DSM 15643 / BCRC 10681 / CIP 101130 / JCM 8532 / KCTC 2640 / LMG 13131 / VPI 4355)).